The following is a 194-amino-acid chain: ATP-dependent Clp protease proteolytic subunit (194 aa).

The active-site Nucleophile is the serine 97. Histidine 122 is a catalytic residue.

The protein belongs to the peptidase S14 family. In terms of assembly, fourteen ClpP subunits assemble into 2 heptameric rings which stack back to back to give a disk-like structure with a central cavity, resembling the structure of eukaryotic proteasomes.

It localises to the cytoplasm. It catalyses the reaction Hydrolysis of proteins to small peptides in the presence of ATP and magnesium. alpha-casein is the usual test substrate. In the absence of ATP, only oligopeptides shorter than five residues are hydrolyzed (such as succinyl-Leu-Tyr-|-NHMec, and Leu-Tyr-Leu-|-Tyr-Trp, in which cleavage of the -Tyr-|-Leu- and -Tyr-|-Trp bonds also occurs).. In terms of biological role, cleaves peptides in various proteins in a process that requires ATP hydrolysis. Has a chymotrypsin-like activity. Plays a major role in the degradation of misfolded proteins. The protein is ATP-dependent Clp protease proteolytic subunit of Lactobacillus delbrueckii subsp. bulgaricus (strain ATCC BAA-365 / Lb-18).